The primary structure comprises 223 residues: MIGWLKGEKIDHWNNGNRAGFVLSCNGVGYEIQLSRRNLIALNNYNVLSIWIHQVLKEDGSNLFGFIEKSERDLFRKLITVSGVGPQLAMSLLDDNSYEQLIANVQNKEVTKLTRSSGVGKRTAERLILELQNKLSDFDLNNEFSPPTKLRPESAEDLNEELLTEIKSALRNLDYSDFEILEAVNTVTSNYLDDAASANERKLLLKSLNFEKLFKQALITLNK.

Residues Met1–Ile67 form a domain I region. The tract at residues Glu68 to Pro146 is domain II. The flexible linker stretch occupies residues Pro147–Asp157. Residues Leu158–Lys223 are domain III.

Belongs to the RuvA family. In terms of assembly, homotetramer. Forms an RuvA(8)-RuvB(12)-Holliday junction (HJ) complex. HJ DNA is sandwiched between 2 RuvA tetramers; dsDNA enters through RuvA and exits via RuvB. An RuvB hexamer assembles on each DNA strand where it exits the tetramer. Each RuvB hexamer is contacted by two RuvA subunits (via domain III) on 2 adjacent RuvB subunits; this complex drives branch migration. In the full resolvosome a probable DNA-RuvA(4)-RuvB(12)-RuvC(2) complex forms which resolves the HJ.

It is found in the cytoplasm. The RuvA-RuvB-RuvC complex processes Holliday junction (HJ) DNA during genetic recombination and DNA repair, while the RuvA-RuvB complex plays an important role in the rescue of blocked DNA replication forks via replication fork reversal (RFR). RuvA specifically binds to HJ cruciform DNA, conferring on it an open structure. The RuvB hexamer acts as an ATP-dependent pump, pulling dsDNA into and through the RuvAB complex. HJ branch migration allows RuvC to scan DNA until it finds its consensus sequence, where it cleaves and resolves the cruciform DNA. In Prochlorococcus marinus (strain MIT 9211), this protein is Holliday junction branch migration complex subunit RuvA.